A 400-amino-acid chain; its full sequence is tRNA(Ile)-lysidine synthase (400 aa).

Position 20–25 (20–25 (SGGLDS)) interacts with ATP.

It belongs to the tRNA(Ile)-lysidine synthase family.

Its subcellular location is the cytoplasm. The catalysed reaction is cytidine(34) in tRNA(Ile2) + L-lysine + ATP = lysidine(34) in tRNA(Ile2) + AMP + diphosphate + H(+). Ligates lysine onto the cytidine present at position 34 of the AUA codon-specific tRNA(Ile) that contains the anticodon CAU, in an ATP-dependent manner. Cytidine is converted to lysidine, thus changing the amino acid specificity of the tRNA from methionine to isoleucine. The sequence is that of tRNA(Ile)-lysidine synthase from Wigglesworthia glossinidia brevipalpis.